We begin with the raw amino-acid sequence, 359 residues long: Peptide chain release factor 1 (359 aa).

The residue at position 236 (Gln236) is an N5-methylglutamine.

This sequence belongs to the prokaryotic/mitochondrial release factor family. Methylated by PrmC. Methylation increases the termination efficiency of RF1.

Its subcellular location is the cytoplasm. Peptide chain release factor 1 directs the termination of translation in response to the peptide chain termination codons UAG and UAA. The sequence is that of Peptide chain release factor 1 from Streptococcus pneumoniae serotype 2 (strain D39 / NCTC 7466).